The primary structure comprises 396 residues: Elongation factor Tu 2 (396 aa).

In terms of domain architecture, tr-type G spans 10 to 206; sequence KPHVNVGTIG…ALDTYIPTPK (197 aa). A G1 region spans residues 19 to 26; that stretch reads GHVDHGKT. Residue 19–26 participates in GTP binding; that stretch reads GHVDHGKT. Thr26 contributes to the Mg(2+) binding site. Residues 60–64 are G2; the sequence is GITIS. The interval 81–84 is G3; sequence DCPG. GTP is bound by residues 81 to 85 and 136 to 139; these read DCPGH and NKAD. The segment at 136-139 is G4; that stretch reads NKAD. Residues 174 to 176 form a G5 region; that stretch reads SAL.

Belongs to the TRAFAC class translation factor GTPase superfamily. Classic translation factor GTPase family. EF-Tu/EF-1A subfamily. Monomer.

The protein resides in the cytoplasm. The catalysed reaction is GTP + H2O = GDP + phosphate + H(+). GTP hydrolase that promotes the GTP-dependent binding of aminoacyl-tRNA to the A-site of ribosomes during protein biosynthesis. This is Elongation factor Tu 2 from Ruthia magnifica subsp. Calyptogena magnifica.